Consider the following 1165-residue polypeptide: DNA-directed RNA polymerase subunit beta (1165 aa).

This sequence belongs to the RNA polymerase beta chain family. As to quaternary structure, the RNAP catalytic core consists of 2 alpha, 1 beta, 1 beta' and 1 omega subunit. When a sigma factor is associated with the core the holoenzyme is formed, which can initiate transcription.

The enzyme catalyses RNA(n) + a ribonucleoside 5'-triphosphate = RNA(n+1) + diphosphate. DNA-dependent RNA polymerase catalyzes the transcription of DNA into RNA using the four ribonucleoside triphosphates as substrates. The sequence is that of DNA-directed RNA polymerase subunit beta from Corynebacterium glutamicum (strain R).